A 508-amino-acid polypeptide reads, in one-letter code: UDP-N-acetylmuramyl-tripeptide synthetase (508 aa).

Serine 35 provides a ligand contact to UDP-N-acetyl-alpha-D-muramoyl-L-alanyl-D-glutamate. ATP is bound at residue 118–124 (GTDGKSS). UDP-N-acetyl-alpha-D-muramoyl-L-alanyl-D-glutamate is bound by residues 163–164 (ST), threonine 190, and arginine 200. N6-carboxylysine is present on lysine 232.

The protein belongs to the MurCDEF family. MurE subfamily. Carboxylation is probably crucial for Mg(2+) binding and, consequently, for the gamma-phosphate positioning of ATP.

It is found in the cytoplasm. The protein operates within cell wall biogenesis; peptidoglycan biosynthesis. Its function is as follows. Catalyzes the addition of an amino acid to the nucleotide precursor UDP-N-acetylmuramoyl-L-alanyl-D-glutamate (UMAG) in the biosynthesis of bacterial cell-wall peptidoglycan. The sequence is that of UDP-N-acetylmuramyl-tripeptide synthetase from Borreliella burgdorferi (strain ATCC 35210 / DSM 4680 / CIP 102532 / B31) (Borrelia burgdorferi).